We begin with the raw amino-acid sequence, 136 residues long: Small integral membrane protein 23 (136 aa).

Residues 1–31 are Cytoplasmic-facing; the sequence is MTIQKTGCRGREAAEVVEQRRRSHHCDDRKQ. Residues 32–52 traverse the membrane as a helical; Signal-anchor for type II membrane protein segment; the sequence is TLLALLILVLYLGMGISGSSW. At 53 to 136 the chain is on the extracellular side; the sequence is EVSGQTKDCN…DLRPEDPCFT (84 aa). Positions 92-124 form a coiled coil; the sequence is LKINLHGFLEKLEKEVRELEQLVRDLEFWLDAL.

The protein localises to the membrane. The sequence is that of Small integral membrane protein 23 (Smim23) from Mus musculus (Mouse).